The following is a 762-amino-acid chain: Endonuclease MutS2 (762 aa).

Residue 333–340 (GVNAGGKT) participates in ATP binding. One can recognise a Smr domain in the interval 688–762 (LDLRGQRSEE…GGSGVKIVKL (75 aa)).

This sequence belongs to the DNA mismatch repair MutS family. MutS2 subfamily. In terms of assembly, homodimer. Binds to stalled ribosomes, contacting rRNA.

In terms of biological role, endonuclease that is involved in the suppression of homologous recombination and thus may have a key role in the control of bacterial genetic diversity. Functionally, acts as a ribosome collision sensor, splitting the ribosome into its 2 subunits. Detects stalled/collided 70S ribosomes which it binds and splits by an ATP-hydrolysis driven conformational change. Acts upstream of the ribosome quality control system (RQC), a ribosome-associated complex that mediates the extraction of incompletely synthesized nascent chains from stalled ribosomes and their subsequent degradation. Probably generates substrates for RQC. The polypeptide is Endonuclease MutS2 (Helicobacter pylori (strain J99 / ATCC 700824) (Campylobacter pylori J99)).